Consider the following 882-residue polypeptide: Valine--tRNA ligase (882 aa).

Positions 45–55 (PNVTGKLHLGH) match the 'HIGH' region motif. The 'KMSKS' region motif lies at 519-523 (KMSKS). Lysine 522 provides a ligand contact to ATP. A coiled-coil region spans residues 808–882 (LADLLNVEEE…RIAEMKKIKS (75 aa)).

This sequence belongs to the class-I aminoacyl-tRNA synthetase family. ValS type 1 subfamily. In terms of assembly, monomer.

It is found in the cytoplasm. The catalysed reaction is tRNA(Val) + L-valine + ATP = L-valyl-tRNA(Val) + AMP + diphosphate. Its function is as follows. Catalyzes the attachment of valine to tRNA(Val). As ValRS can inadvertently accommodate and process structurally similar amino acids such as threonine, to avoid such errors, it has a 'posttransfer' editing activity that hydrolyzes mischarged Thr-tRNA(Val) in a tRNA-dependent manner. This Streptococcus pyogenes serotype M28 (strain MGAS6180) protein is Valine--tRNA ligase.